The sequence spans 93 residues: Large ribosomal subunit protein uL23 (93 aa).

This sequence belongs to the universal ribosomal protein uL23 family. In terms of assembly, part of the 50S ribosomal subunit. Contacts protein L29, and trigger factor when it is bound to the ribosome.

Functionally, one of the early assembly proteins it binds 23S rRNA. One of the proteins that surrounds the polypeptide exit tunnel on the outside of the ribosome. Forms the main docking site for trigger factor binding to the ribosome. This Opitutus terrae (strain DSM 11246 / JCM 15787 / PB90-1) protein is Large ribosomal subunit protein uL23.